Reading from the N-terminus, the 269-residue chain is MEHIARFFFGVSGNVIALFLFLSPVVTFWRIIRKRSTEDFSGVPYNMTLLNCLLSAWYGLPFVSPNNILVSTINGTGSVIEAIYVVIFLIFAVDRRARLRMLGLLSIVVSIFATVVLVSLLALHGNARKVFCGLAATIFSICMYASPLSIMRLVIKTKSVEYMPFLLSLAVFLCGTSWFIYGLLGRDPFIIIPNGCGSFLGLVQLILYFIYRKNKGPAVPAGKGEAAAAADVEDAKKVAAAVEMADATTTNKAAADTVVGDGKVVASQV.

The Extracellular portion of the chain corresponds to Met-1 to Arg-6. A helical membrane pass occupies residues Phe-7–Thr-27. The 89-residue stretch at Phe-8–Arg-96 folds into the MtN3/slv 1 domain. Topologically, residues Phe-28–Gly-42 are cytoplasmic. Residues Val-43–Val-63 form a helical membrane-spanning segment. Residues Ser-64–Thr-72 lie on the Extracellular side of the membrane. Residues Ile-73–Val-93 traverse the membrane as a helical segment. At Asp-94 to Arg-100 the chain is on the cytoplasmic side. Residues Met-101–Leu-121 form a helical membrane-spanning segment. At Ala-122–Lys-129 the chain is on the extracellular side. A helical membrane pass occupies residues Val-130–Ile-150. Positions Cys-132–Lys-215 constitute a MtN3/slv 2 domain. Residues Met-151 to Pro-164 lie on the Cytoplasmic side of the membrane. Residues Phe-165–Gly-185 form a helical membrane-spanning segment. At Arg-186–Phe-189 the chain is on the extracellular side. A helical membrane pass occupies residues Ile-190–Ile-210. Topologically, residues Tyr-211–Val-269 are cytoplasmic.

The protein belongs to the SWEET sugar transporter family. Forms homooligomers and/or heterooligomers.

It localises to the cell membrane. In terms of biological role, mediates both low-affinity uptake and efflux of sugar across the plasma membrane. The chain is Bidirectional sugar transporter SWEET1a from Sorghum bicolor (Sorghum).